Reading from the N-terminus, the 522-residue chain is Transactivator/viroplasmin protein (522 aa).

Residues 487–500 show a composition bias toward basic and acidic residues; sequence KDASTDRGTTDKDG. Residues 487-522 are disordered; that stretch reads KDASTDRGTTDKDGPPPTRSIVEKEDVPTTSSKQVD.

It belongs to the caulimoviridae viroplasmin family.

The protein resides in the host cytoplasm. Functionally, enhances the ribosomal termination-reinitiation event leading to the translation of major open reading frames on the polycistronic viral RNAs. In Arabidopsis thaliana (Mouse-ear cress), this protein is Transactivator/viroplasmin protein.